A 420-amino-acid polypeptide reads, in one-letter code: Glucose-1-phosphate adenylyltransferase (420 aa).

Alpha-D-glucose 1-phosphate-binding positions include Y107, G173, 188 to 189, and S206; that span reads EK.

The protein belongs to the bacterial/plant glucose-1-phosphate adenylyltransferase family. In terms of assembly, homotetramer.

The catalysed reaction is alpha-D-glucose 1-phosphate + ATP + H(+) = ADP-alpha-D-glucose + diphosphate. The protein operates within glycan biosynthesis; glycogen biosynthesis. In terms of biological role, involved in the biosynthesis of ADP-glucose, a building block required for the elongation reactions to produce glycogen. Catalyzes the reaction between ATP and alpha-D-glucose 1-phosphate (G1P) to produce pyrophosphate and ADP-Glc. The protein is Glucose-1-phosphate adenylyltransferase of Shewanella frigidimarina (strain NCIMB 400).